The following is a 404-amino-acid chain: Phosphopentomutase (404 aa).

Mn(2+) is bound by residues Asp-10, Asp-303, His-308, Asp-344, His-345, and His-356.

Belongs to the phosphopentomutase family. Requires Mn(2+) as cofactor.

It is found in the cytoplasm. It carries out the reaction 2-deoxy-alpha-D-ribose 1-phosphate = 2-deoxy-D-ribose 5-phosphate. The enzyme catalyses alpha-D-ribose 1-phosphate = D-ribose 5-phosphate. It participates in carbohydrate degradation; 2-deoxy-D-ribose 1-phosphate degradation; D-glyceraldehyde 3-phosphate and acetaldehyde from 2-deoxy-alpha-D-ribose 1-phosphate: step 1/2. Isomerase that catalyzes the conversion of deoxy-ribose 1-phosphate (dRib-1-P) and ribose 1-phosphate (Rib-1-P) to deoxy-ribose 5-phosphate (dRib-5-P) and ribose 5-phosphate (Rib-5-P), respectively. In Shewanella baltica (strain OS155 / ATCC BAA-1091), this protein is Phosphopentomutase.